The chain runs to 365 residues: S-adenosylmethionine:tRNA ribosyltransferase-isomerase (365 aa).

The protein belongs to the QueA family. In terms of assembly, monomer.

It is found in the cytoplasm. It carries out the reaction 7-aminomethyl-7-carbaguanosine(34) in tRNA + S-adenosyl-L-methionine = epoxyqueuosine(34) in tRNA + adenine + L-methionine + 2 H(+). The protein operates within tRNA modification; tRNA-queuosine biosynthesis. Functionally, transfers and isomerizes the ribose moiety from AdoMet to the 7-aminomethyl group of 7-deazaguanine (preQ1-tRNA) to give epoxyqueuosine (oQ-tRNA). The chain is S-adenosylmethionine:tRNA ribosyltransferase-isomerase from Rickettsia africae (strain ESF-5).